Reading from the N-terminus, the 231-residue chain is Orotidine 5'-phosphate decarboxylase (231 aa).

Substrate-binding positions include Asp11, Lys34, 61–70 (DLKLHDIPNT), Thr117, Arg179, Gln188, Gly208, and Arg209. Catalysis depends on Lys63, which acts as the Proton donor.

Belongs to the OMP decarboxylase family. Type 1 subfamily. As to quaternary structure, homodimer.

It carries out the reaction orotidine 5'-phosphate + H(+) = UMP + CO2. It functions in the pathway pyrimidine metabolism; UMP biosynthesis via de novo pathway; UMP from orotate: step 2/2. In terms of biological role, catalyzes the decarboxylation of orotidine 5'-monophosphate (OMP) to uridine 5'-monophosphate (UMP). The polypeptide is Orotidine 5'-phosphate decarboxylase (Streptococcus thermophilus (strain ATCC BAA-491 / LMD-9)).